Here is a 140-residue protein sequence, read N- to C-terminus: MDLALKVKILKMLCKYLTNKNNISLFFNILTNIPNGDDYMFECVQHFIQMKNSNECDINDLFLKLKSQLLVWQDSSFEQFLKIEKEEDNFLESPLEVAEGAIKCKCGSERVFSFSKQTRSGDESTSVFALCSSCKSKWVL.

Residues 100–139 (GAIKCKCGSERVFSFSKQTRSGDESTSVFALCSSCKSKWV) form a TFIIS-type zinc finger. C104, C106, C131, and C134 together coordinate Zn(2+).

The protein belongs to the IIV-6 349L family.

This Acheta domesticus (House cricket) protein is Putative transcription elongation factor S-II-like protein 349L.